The following is a 179-amino-acid chain: X-linked lymphocyte-regulated protein 5C (179 aa).

The span at 1-11 shows a compositional bias: basic and acidic residues; the sequence is MSNKEQKDMKK. The tract at residues 1–75 is disordered; sequence MSNKEQKDMK…MQDFKGDDGT (75 aa). The span at 42–53 shows a compositional bias: low complexity; that stretch reads GTSGMGSHSSGS. Residues 56–75 are compositionally biased toward basic and acidic residues; that stretch reads QEAREPVQKKMQDFKGDDGT. The stretch at 146 to 175 forms a coiled coil; the sequence is ITQQQMKILQTAIEDHETKLKNAKDMCDTF.

Belongs to the XLR/SYCP3 family. Expressed in testis (at protein level). Also expressed in ovary. Not detected in other tissues tested.

Its subcellular location is the nucleus. It is found in the chromosome. The chain is X-linked lymphocyte-regulated protein 5C from Mus musculus (Mouse).